We begin with the raw amino-acid sequence, 362 residues long: Adenosine deaminase (362 aa).

Residues His41 and His43 each contribute to the Zn(2+) site. 43–45 provides a ligand contact to a purine D-ribonucleoside; that stretch reads HLD. The interval 169–183 is gating helix loop; regulates binding affinity for substrates and thus substrate selectivity; the sequence is IGETGISEESLRKAA. A purine D-ribonucleoside is bound at residue Gly200. His225 contributes to the Zn(2+) binding site. A purine D-ribonucleoside-binding residues include Glu228, His252, and Asp309. Asp309 is a Zn(2+) binding site.

This sequence belongs to the metallo-dependent hydrolases superfamily. Adenosine and AMP deaminases family. Requires Zn(2+) as cofactor.

It catalyses the reaction adenosine + H2O + H(+) = inosine + NH4(+). It functions in the pathway purine metabolism; purine nucleoside salvage. With respect to regulation, inhibited by coformycin but not by methylthiocoformycin (MT-coformycin). In terms of biological role, catalyzes the hydrolytic deamination of adenosine to produce inosine. Unlike other Plasmodium adenosine deaminases, does not catalyze the deamination of 5'-methylthioadenosine (MTA). Plays an essential role in the purine salvage pathway which allows the parasite to use host cell purines for the synthesis of nucleic acids. The polypeptide is Adenosine deaminase (Plasmodium gallinaceum).